A 133-amino-acid chain; its full sequence is Ribosome-binding factor A (133 aa).

It belongs to the RbfA family. Monomer. Binds 30S ribosomal subunits, but not 50S ribosomal subunits or 70S ribosomes.

It localises to the cytoplasm. One of several proteins that assist in the late maturation steps of the functional core of the 30S ribosomal subunit. Associates with free 30S ribosomal subunits (but not with 30S subunits that are part of 70S ribosomes or polysomes). Required for efficient processing of 16S rRNA. May interact with the 5'-terminal helix region of 16S rRNA. This Chelativorans sp. (strain BNC1) protein is Ribosome-binding factor A.